Consider the following 558-residue polypeptide: Delta-1-pyrroline-5-carboxylate dehydrogenase, mitochondrial (558 aa).

NAD(+)-binding positions include Ser-198, Lys-223, and 276–280 (GSTGV). Residue Glu-306 is the Proton acceptor of the active site. The Nucleophile role is filled by Cys-340. Residue Glu-438 coordinates NAD(+).

Belongs to the aldehyde dehydrogenase family.

It is found in the mitochondrion matrix. The catalysed reaction is L-glutamate 5-semialdehyde + NAD(+) + H2O = L-glutamate + NADH + 2 H(+). Its pathway is amino-acid degradation; L-proline degradation into L-glutamate; L-glutamate from L-proline: step 2/2. Irreversible conversion of delta-1-pyrroline-5-carboxylate (P5C), derived either from proline or ornithine, to glutamate. This is a necessary step in the pathway interconnecting the urea and tricarboxylic acid cycles. This chain is Delta-1-pyrroline-5-carboxylate dehydrogenase, mitochondrial, found in Dictyostelium discoideum (Social amoeba).